A 445-amino-acid chain; its full sequence is Na(+)-translocating NADH-quinone reductase subunit A (445 aa).

This sequence belongs to the NqrA family. Composed of six subunits; NqrA, NqrB, NqrC, NqrD, NqrE and NqrF.

It catalyses the reaction a ubiquinone + n Na(+)(in) + NADH + H(+) = a ubiquinol + n Na(+)(out) + NAD(+). Its function is as follows. NQR complex catalyzes the reduction of ubiquinone-1 to ubiquinol by two successive reactions, coupled with the transport of Na(+) ions from the cytoplasm to the periplasm. NqrA to NqrE are probably involved in the second step, the conversion of ubisemiquinone to ubiquinol. The polypeptide is Na(+)-translocating NADH-quinone reductase subunit A (Pseudomonas aeruginosa (strain ATCC 15692 / DSM 22644 / CIP 104116 / JCM 14847 / LMG 12228 / 1C / PRS 101 / PAO1)).